We begin with the raw amino-acid sequence, 427 residues long: MEAKVEKIETNVVKLEIKVEAEKFDAALTKAYNKNKGKYNVPGFRKGKVPMAILKKMYGIEIFYDDAVNIAIDESYNEALKAEDIRPVDYPKVDIVEIGEGKELVYTATVTTYPEVEIGEYKGLDIKKPSYEVSEEEVEKQVKEMQSKNARVETKEEGTIADGNIAIIDFKGFVDGEAFEGGEGTDYPLEIGSGTFIDNFEEQLVGLAIGDKKEVNVTFPENYGKEELNAKPAMFEVTVKGIKVKELPELDDEFAKEVSEFDTLAELKENVKKRLEESNNERAEREFEEAVITSIIETSKIDLPEVMLTKEIDSMMKDLESRLQYQGLSLDQYMEFTGNTIEKMREFMKENAERKVKADIILEAVAKAEEVKATDEQLNERALELGRMYGPKDPKKMANILLKAQKAMIEKDIIIENTLKLIKESCK.

Residues 163 to 248 (GNIAIIDFKG…VKGIKVKELP (86 aa)) form the PPIase FKBP-type domain.

This sequence belongs to the FKBP-type PPIase family. Tig subfamily.

Its subcellular location is the cytoplasm. It carries out the reaction [protein]-peptidylproline (omega=180) = [protein]-peptidylproline (omega=0). In terms of biological role, involved in protein export. Acts as a chaperone by maintaining the newly synthesized protein in an open conformation. Functions as a peptidyl-prolyl cis-trans isomerase. This chain is Trigger factor, found in Clostridium botulinum (strain Alaska E43 / Type E3).